The primary structure comprises 315 residues: MAMYQNMLVVIDPNQDDQPALRRAVYLHQRIGGKIKAFLPIYDFSYEMTTLLSPDERTAMRQGVISQRTAWIREQAKYYLEAGVPIEIKVVWHNRPFEVIIQEVIAGSHDLVLKMAHQHDRLEAVIFTPTDWHLLRKCPSPVWMVKDQPWPEGGKALVAVNLASEEPYHNALNEKLVKETLQLAEQVNHTEVHLVGAYPVTPINIAIELPEFDPSVYNDAIRGQHLLAMKALRQKFSIDEKVTHVEKGLPEEVIPDLAEHLQAGIVVLGTVGRTGLSAAFLGNTAEQVIDHLRCDLLVIKPDEYQTPVELDDEDD.

The protein belongs to the universal stress protein A family.

The protein localises to the cytoplasm. Functionally, required for resistance to DNA-damaging agents. The chain is Universal stress protein E (uspE) from Salmonella typhi.